A 1333-amino-acid chain; its full sequence is NPC1-like intracellular cholesterol transporter 1 (1333 aa).

A signal peptide spans 1–20 (MAAAWQGWLLWALLLNSAQG). Topologically, residues 21–284 (ELYTPTHKAG…SFYMGRMPGW (264 aa)) are extracellular. 9 cysteine pairs are disulfide-bonded: Cys32/Cys90, Cys38/Cys56, Cys77/Cys125, Cys91/Cys129, Cys113/Cys254, Cys116/Cys172, Cys189/Cys197, Cys243/Cys259, and Cys256/Cys263. The helical transmembrane segment at 285–305 (LALIIIFTAVFVLLSVVLVYL) threads the bilayer. At 306-352 (RVASNRNKNKTAGSQEAPNLPRKRRFSPHTVLGRFFESWGTRVASWP) the chain is on the cytoplasmic side. The chain crosses the membrane as a helical span at residues 353–373 (LTVLALSFIVVIALSVGLTFI). At 374 to 632 (ELTTDPVELW…DEINRTTIQD (259 aa)) the chain is on the extracellular side. Intrachain disulfides connect Cys471–Cys485 and Cys525–Cys542. The 166-residue stretch at 632 to 797 (DLPVFAISYL…MTAFVALLSL (166 aa)) folds into the SSD domain. Residues 633–653 (LPVFAISYLIVFLYISLALGS) form a helical membrane-spanning segment. At 654–665 (YSRWSRVAVDSK) the chain is on the cytoplasmic side. A helical membrane pass occupies residues 666–686 (ATLGLGGVAVVLGAVVAAMGF). Residues 687–696 (YSYLGVPSSL) lie on the Extracellular side of the membrane. The chain crosses the membrane as a helical span at residues 697-717 (VIIQVVPFLVLAVGADNIFIF). The Cytoplasmic segment spans residues 718 to 742 (VLEYQRLPRMPGEQREAHIGRTLGS). A helical membrane pass occupies residues 743 to 763 (VAPSMLLCSLSEAICFFLGAL). The Extracellular segment spans residues 764 to 776 (TSMPAVRTFALTS). Residues 777 to 797 (GLAIIFDFLLQMTAFVALLSL) form a helical membrane-spanning segment. Residues 798 to 846 (DSKRQEASRPDVVCCFSSRNLPPPKQKEGLLLCFFRKIYTPFLLHRFIR) are Cytoplasmic-facing. Residues 847–867 (PVVLLLFLVLFGANLYLMCNI) traverse the membrane as a helical segment. The Extracellular portion of the chain corresponds to 868-1113 (SVGLDQDLAL…QQYLTVLPEG (246 aa)). Intrachain disulfides connect Cys920/Cys925, Cys967/Cys1025, and Cys981/Cys990. Residues 1114 to 1134 (IFTLALCFVPTFVVCYLLLGL) traverse the membrane as a helical segment. At 1135–1142 (DIRSGILN) the chain is on the cytoplasmic side. Residues 1143–1163 (LLSIIMILVDTIGLMAVWGIS) form a helical membrane-spanning segment. The Extracellular portion of the chain corresponds to 1164–1165 (YN). Residues 1166–1186 (AVSLINLVTAVGMSVEFVSHI) form a helical membrane-spanning segment. Topologically, residues 1187-1206 (TRSFAVSTKPTRLERAKDAT) are cytoplasmic. The helical transmembrane segment at 1207-1227 (IFMGSAVFAGVAMTNFPGILI) threads the bilayer. The Extracellular segment spans residues 1228–1242 (LGFAQAQLIQIFFFR). The chain crosses the membrane as a helical span at residues 1243–1263 (LNLLITLLGLLHGLVFLPVVL). Topologically, residues 1264 to 1333 (SYLGPDVNQA…SSLPKSDQKF (70 aa)) are cytoplasmic.

This sequence belongs to the patched family. Interacts with RAB11A, MYO5B and RAB11FIP2. Interaction with RAB11A, MYO5B and RAB11FIP2 is required for proper transport to the plasma membrane upon cholesterol depletion. Interacts with NPC2. Interacts with LIMA1. In terms of processing, highly glycosylated. Expressed in small intestine, stomach and muscle, along with detectable expression in lung, heart, gall bladder, brain, testis, skin and liver. Expression in liver is extremely low.

Its subcellular location is the apical cell membrane. It localises to the cell membrane. The enzyme catalyses cholesterol(in) = cholesterol(out). It catalyses the reaction sitosterol(out) = sitosterol(in). Functionally, plays a major role in cholesterol homeostasis. Critical for the uptake of cholesterol across the plasma membrane of the intestinal enterocyte. Involved in plant sterol absorption, it transports sitosterol, although at lower rates than cholesterol. May have a function in the transport of multiple lipids and their homeostasis, thereby influencing lipid metabolism regulation. May be involved in caveolin trafficking from the plasma membrane. Acts as a negative regulator of NPC2 and down-regulates its expression and secretion by inhibiting its maturation and accelerating its degradation. This Mus musculus (Mouse) protein is NPC1-like intracellular cholesterol transporter 1.